The following is a 500-amino-acid chain: Probable lipoprotein aminopeptidase LpqL (500 aa).

The N-terminal stretch at 1–24 is a signal peptide; the sequence is MVNKSRMMPAVLAVAVVVAFLTTG. A lipid anchor (N-palmitoyl cysteine) is attached at Cys25. Cys25 carries S-diacylglycerol cysteine lipidation. The region spanning 140–231 is the PA domain; it reads VTGPLVAAPA…VTKSVGFQLR (92 aa). Residues His271 and Asp283 each coordinate Zn(2+). Glu316 acts as the Proton acceptor in catalysis. Residues Glu317, Asp345, and His448 each coordinate Zn(2+).

The protein belongs to the peptidase M28 family. M28A subfamily. Requires Zn(2+) as cofactor. In terms of processing, modified by Lgt on Cys-25 with an S-linked diacylglycerol with a mixture of C16 and C19 fatty acids (palmitic and tuberculostearic acid), signal peptide is removed by LspA, modified by Lnt with an amide-linked mixture of C16 and C19 fatty acids, expressed in M.bovis.

The protein resides in the cell membrane. It carries out the reaction Release of an N-terminal amino acid, Xaa-|-Yaa-, in which Xaa is preferably Leu, but may be other amino acids including Pro although not Arg or Lys, and Yaa may be Pro. Amino acid amides and methyl esters are also readily hydrolyzed, but rates on arylamides are exceedingly low.. In terms of biological role, an aminopeptidase; acts on free N-terminal amino groups with a very strong preference for Leu in the first position. The polypeptide is Probable lipoprotein aminopeptidase LpqL (lpqL) (Mycobacterium tuberculosis (strain ATCC 25618 / H37Rv)).